A 204-amino-acid polypeptide reads, in one-letter code: Ribonuclease HII (204 aa).

One can recognise an RNase H type-2 domain in the interval 1-197 (MILGIDEAGR…KNRILNPKLL (197 aa)). A divalent metal cation contacts are provided by aspartate 6, glutamate 7, and aspartate 103.

Belongs to the RNase HII family. Requires Mn(2+) as cofactor. It depends on Mg(2+) as a cofactor.

The protein resides in the cytoplasm. The catalysed reaction is Endonucleolytic cleavage to 5'-phosphomonoester.. In terms of biological role, endonuclease that specifically degrades the RNA of RNA-DNA hybrids. This Helicobacter pylori (strain G27) protein is Ribonuclease HII.